The chain runs to 429 residues: Histidine--tRNA ligase (429 aa).

This sequence belongs to the class-II aminoacyl-tRNA synthetase family. Homodimer.

It is found in the cytoplasm. The enzyme catalyses tRNA(His) + L-histidine + ATP = L-histidyl-tRNA(His) + AMP + diphosphate + H(+). This is Histidine--tRNA ligase from Streptococcus pneumoniae (strain 70585).